Here is a 356-residue protein sequence, read N- to C-terminus: Torsin-like protein (356 aa).

Residues 1–18 form the signal peptide; the sequence is MKLDYVLLLLFHLCFVNT. ATP is bound at residue 110–117; it reads GYTGSGKN. N-linked (GlcNAc...) asparagine glycosylation is found at Asn125 and Asn250.

The protein belongs to the ClpA/ClpB family. Torsin subfamily.

The protein localises to the endoplasmic reticulum lumen. Its function is as follows. May serve as a molecular chaperone assisting in the proper folding of secreted and/or membrane proteins. This is Torsin-like protein (ooc-5) from Caenorhabditis elegans.